A 193-amino-acid chain; its full sequence is SCO1 protein homolog (193 aa).

The first 18 residues, 1 to 18 (MKVIKGLTAGLIFLFLCA), serve as a signal peptide directing secretion. C19 carries the N-palmitoyl cysteine lipid modification. C19 carries the S-diacylglycerol cysteine lipid modification. The 166-residue stretch at 26 to 191 (DPLNYEVEPF…IISDVKSAST (166 aa)) folds into the Thioredoxin domain. Cu cation-binding residues include C64, C68, and H154.

It belongs to the SCO1/2 family. In terms of assembly, monomer.

Its subcellular location is the cell membrane. Functionally, necessary for insertion of copper into the active site of cytochrome c oxidase. May play a role in copper homeostasis or redox signaling. The chain is SCO1 protein homolog (ypmQ) from Bacillus subtilis (strain 168).